The chain runs to 111 residues: Large ribosomal subunit protein eL30 (111 aa).

The protein belongs to the eukaryotic ribosomal protein eL30 family.

The protein is Large ribosomal subunit protein eL30 (RPL30) of Oryza sativa subsp. japonica (Rice).